The chain runs to 81 residues: High-potential iron-sulfur protein (81 aa).

[4Fe-4S] cluster is bound by residues Cys43, Cys46, Cys59, and Cys73.

Belongs to the high-potential iron-sulfur protein (HiPIP) family. Homodimer.

In terms of biological role, specific class of high-redox-potential 4Fe-4S ferredoxins. Functions in anaerobic electron transport in most purple and in some other photosynthetic bacteria and in at least one genus (Paracoccus) of halophilic, denitrifying bacteria. In Thiococcus pfennigii (Thiocapsa pfennigii), this protein is High-potential iron-sulfur protein (hip).